Here is a 327-residue protein sequence, read N- to C-terminus: Poly(ribitol-phosphate) beta-N-acetylglucosaminyltransferase TarP (327 aa).

UDP-N-acetyl-alpha-D-glucosamine contacts are provided by residues Pro9, Asp41, Asn68, Arg76, and 92 to 94 (DSD). Asp94 contacts Mn(2+). The Proton acceptor role is filled by Asp181.

This sequence belongs to the glycosyltransferase 2 family. As to quaternary structure, homotrimer. Requires Mn(2+) as cofactor.

It carries out the reaction 4-O-[(D-ribitylphospho)(n)-di{(2R)-glycerylphospho}]-N-acetyl-beta-D-mannosaminyl-(1-&gt;4)-N-acetyl-alpha-D-glucosaminyl di-trans,octa-cis-undecaprenyl diphosphate + n UDP-N-acetyl-alpha-D-glucosamine = 4-O-([3-N-acetyl-beta-D-glucosaminyl-1-D-ribitylphospho](n)-di{[2R]-1-glycerylphospho})-N-acetyl-beta-D-mannosaminyl-(1-&gt;4)-N-acetyl-alpha-D-glucosaminyl di-trans,octa-cis-undecaprenyl diphosphate + n UDP + n H(+). It participates in cell wall biogenesis; poly(ribitol phosphate) teichoic acid biosynthesis. Functionally, attaches beta-O-GlcNAc (beta-O-N-acetyl-D-glucosamine) residues to the C3 position of poly(RboP)-wall teichoic acids (WTAs). Attenuates immunogenicity of WTA and protects S.aureus against adaptative host defenses by allowing bacteria to evade recognition by preexisting anti-S.aureus antibodies. Also protects the cell from podophage infection. The chain is Poly(ribitol-phosphate) beta-N-acetylglucosaminyltransferase TarP from Staphylococcus aureus (strain N315).